The sequence spans 273 residues: Pantothenate synthetase (273 aa).

27–34 (MGALHQGH) is an ATP binding site. Histidine 34 functions as the Proton donor in the catalytic mechanism. (R)-pantoate is bound at residue glutamine 58. Residue glutamine 58 participates in beta-alanine binding. 144–147 (GKKD) is a binding site for ATP. Glutamine 150 is a binding site for (R)-pantoate. ATP contacts are provided by residues valine 173 and 181-184 (LSSR).

This sequence belongs to the pantothenate synthetase family. Homodimer.

It localises to the cytoplasm. The enzyme catalyses (R)-pantoate + beta-alanine + ATP = (R)-pantothenate + AMP + diphosphate + H(+). It participates in cofactor biosynthesis; (R)-pantothenate biosynthesis; (R)-pantothenate from (R)-pantoate and beta-alanine: step 1/1. Its function is as follows. Catalyzes the condensation of pantoate with beta-alanine in an ATP-dependent reaction via a pantoyl-adenylate intermediate. The chain is Pantothenate synthetase from Nitratiruptor sp. (strain SB155-2).